The sequence spans 453 residues: Bifunctional protein GlmU (453 aa).

The segment at 1 to 225 (MHAHVILAAG…AEEALGVNTR (225 aa)) is pyrophosphorylase. UDP-N-acetyl-alpha-D-glucosamine-binding positions include 7–10 (LAAG), lysine 21, glutamine 72, and 77–78 (GT). Aspartate 102 is a binding site for Mg(2+). Positions 138, 152, 167, and 223 each coordinate UDP-N-acetyl-alpha-D-glucosamine. Asparagine 223 serves as a coordination point for Mg(2+). Residues 226-246 (EELARVEGVLLRRLRAEWMGK) are linker. Residues 247–453 (GVRMILPETI…GYALRKLGEG (207 aa)) are N-acetyltransferase. 2 residues coordinate UDP-N-acetyl-alpha-D-glucosamine: arginine 329 and lysine 347. Histidine 359 functions as the Proton acceptor in the catalytic mechanism. UDP-N-acetyl-alpha-D-glucosamine-binding residues include tyrosine 362 and asparagine 373. Acetyl-CoA contacts are provided by residues alanine 376, 382 to 383 (NY), serine 401, alanine 419, and arginine 436.

This sequence in the N-terminal section; belongs to the N-acetylglucosamine-1-phosphate uridyltransferase family. It in the C-terminal section; belongs to the transferase hexapeptide repeat family. In terms of assembly, homotrimer. Mg(2+) serves as cofactor.

It is found in the cytoplasm. It carries out the reaction alpha-D-glucosamine 1-phosphate + acetyl-CoA = N-acetyl-alpha-D-glucosamine 1-phosphate + CoA + H(+). It catalyses the reaction N-acetyl-alpha-D-glucosamine 1-phosphate + UTP + H(+) = UDP-N-acetyl-alpha-D-glucosamine + diphosphate. The protein operates within nucleotide-sugar biosynthesis; UDP-N-acetyl-alpha-D-glucosamine biosynthesis; N-acetyl-alpha-D-glucosamine 1-phosphate from alpha-D-glucosamine 6-phosphate (route II): step 2/2. It functions in the pathway nucleotide-sugar biosynthesis; UDP-N-acetyl-alpha-D-glucosamine biosynthesis; UDP-N-acetyl-alpha-D-glucosamine from N-acetyl-alpha-D-glucosamine 1-phosphate: step 1/1. It participates in bacterial outer membrane biogenesis; LPS lipid A biosynthesis. Functionally, catalyzes the last two sequential reactions in the de novo biosynthetic pathway for UDP-N-acetylglucosamine (UDP-GlcNAc). The C-terminal domain catalyzes the transfer of acetyl group from acetyl coenzyme A to glucosamine-1-phosphate (GlcN-1-P) to produce N-acetylglucosamine-1-phosphate (GlcNAc-1-P), which is converted into UDP-GlcNAc by the transfer of uridine 5-monophosphate (from uridine 5-triphosphate), a reaction catalyzed by the N-terminal domain. This chain is Bifunctional protein GlmU, found in Thermus thermophilus (strain ATCC BAA-163 / DSM 7039 / HB27).